A 387-amino-acid polypeptide reads, in one-letter code: Fetuin-B (387 aa).

Residues 1–18 form the signal peptide; the sequence is MNVLLLLVLCTLAMGCGA. 2 consecutive Cystatin fetuin-B-type domains span residues 25 to 139 and 150 to 258; these read AARP…YNCT and MTCP…VTCS. N-linked (GlcNAc...) asparagine glycosylation occurs at asparagine 37. 5 disulfide bridges follow: cysteine 94/cysteine 105, cysteine 118/cysteine 138, cysteine 152/cysteine 155, cysteine 217/cysteine 225, and cysteine 238/cysteine 257. A glycan (N-linked (GlcNAc...) asparagine) is linked at asparagine 137. The tract at residues 264 to 306 is disordered; sequence APTPRGENATVNQRPANPSKTEELQQQNTAPTNSPTKAVPKGS. Residue asparagine 271 is glycosylated (N-linked (GlcNAc...) asparagine). Over residues 272 to 299 the composition is skewed to polar residues; sequence ATVNQRPANPSKTEELQQQNTAPTNSPT. O-linked (GalNAc...) threonine glycosylation is found at threonine 292 and threonine 295. A Phosphoserine modification is found at serine 320. The disordered stretch occupies residues 366–387; sequence KEQRSAECPGPAQKGYPFILPS.

Belongs to the fetuin family. Liver and testis.

Its subcellular location is the secreted. Its function is as follows. Protease inhibitor required for egg fertilization. Required to prevent premature zona pellucida hardening before fertilization, probably by inhibiting the protease activity of ASTL, a protease that mediates the cleavage of ZP2 and triggers zona pellucida hardening. The protein is Fetuin-B (FETUB) of Bos taurus (Bovine).